Here is a 693-residue protein sequence, read N- to C-terminus: Elongation factor G (693 aa).

The region spanning 8 to 282 is the tr-type G domain; the sequence is EKTRNIGIMA…AVIDYLPSPL (275 aa). GTP-binding positions include 17 to 24, 81 to 85, and 135 to 138; these read AHIDAGKT, DTPGH, and NKMD.

Belongs to the TRAFAC class translation factor GTPase superfamily. Classic translation factor GTPase family. EF-G/EF-2 subfamily.

It localises to the cytoplasm. Functionally, catalyzes the GTP-dependent ribosomal translocation step during translation elongation. During this step, the ribosome changes from the pre-translocational (PRE) to the post-translocational (POST) state as the newly formed A-site-bound peptidyl-tRNA and P-site-bound deacylated tRNA move to the P and E sites, respectively. Catalyzes the coordinated movement of the two tRNA molecules, the mRNA and conformational changes in the ribosome. The chain is Elongation factor G from Staphylococcus aureus (strain Newman).